The primary structure comprises 378 residues: MAMTVNTNVSALVAQRHLNSASEMLNQSLERLSSGNRINSAKDDAAGLQISNRLETQMRGLGIAVRNANDGISIMQTAEGAMQETTQLLQRMRDLSLQSANGSNSAAERVALQEEMAALNDELNRIAETTSFAGRKLLNGQFMKASFQIGASSGEAVQLSLRNMRSDSLEMGGFSYVAAALADKQWQVTKGKQQLNISYVNAQGENENIQIQAKEGDDIEELATYINGKTDKVSASVNEKGQLQLYIAGKETSGTLSFSGSLANELQMNLLGYEAVDNLDISSAGGAQRAVSVIDTALKYVDGHRSELGAMQNRFQHAISNLDNVHENLAASNSRIKDADYAKETTQMIKQQILQQVSTSVLAQAKRQPKFVLFLLRN.

Coiled-coil stretches lie at residues 98–139 (QSAN…KLLN) and 311–339 (MQNR…IKDA).

It belongs to the bacterial flagellin family. As to quaternary structure, heteromer of multiple flagellin subunits including FlaA, FlaB, FlaC, FlaD and FlaE.

It is found in the secreted. The protein localises to the bacterial flagellum. In terms of biological role, flagellin is the subunit protein which polymerizes to form the filaments of bacterial flagella. FlaE is not essential for flagellar synthesis and motility. This is Flagellin E (flaE) from Vibrio cholerae serotype O1 (strain ATCC 39541 / Classical Ogawa 395 / O395).